Consider the following 104-residue polypeptide: Circadian clock oscillator protein KaiB (104 aa).

It belongs to the KaiB family. In terms of assembly, the KaiABC complex composition changes during the circadian cycle to control KaiC phosphorylation. Complexes KaiC(6), KaiA(2-4):KaiC(6), KaiB(6):KaiC(6) and KaiC(6):KaiB(6):KaiA(12) are among the most important forms, many form cooperatively. Undergoes a major conformational rearrangment; in the free state forms homotetramers as a dimer of dimers. When bound to the CI domain of KaiC switches to a monomeric thioredoxin-fold (KaiB(fs)). KaiB(fs) binds CikA, leading it to dephosphorylate phospho-RpaA.

In terms of biological role, key component of the KaiABC oscillator complex, which constitutes the main circadian regulator in cyanobacteria. Complex composition changes during the circadian cycle to control KaiC phosphorylation. KaiA stimulates KaiC autophosphorylation, while KaiB sequesters KaiA, leading to KaiC autodephosphorylation. Phospho-Ser-431 KaiC accumulation triggers binding of KaiB to form the KaiB(6):KaiC(6) complex, leading to changes in output regulators CikA and SasA. KaiB switches to a thioredoxin-like fold (KaiB(fs)) when bound to KaiC. KaiB(6):KaiC(6) formation exposes a site for KaiA binding that sequesters KaiA from KaiC, making the KaiC(6):KaiB(6):KaiA(12) complex that results in KaiC autodephosphorylation. Functionally, a metamorphic protein which reversibly switches between an inactive tetrameric fold and a rare, thioredoxin-like monomeric fold (KaiB(fs)). KaiB(fs) binds phospho-KaiC, KaiA and CikA. KaiA and CikA compete for binding to KaiB(fs), and KaiB(fs) and SasA compete for binding to KaiC, thus the clock oscillator and output signal pathway are tightly coupled. In Acaryochloris marina (strain MBIC 11017), this protein is Circadian clock oscillator protein KaiB.